The following is a 323-amino-acid chain: Melanocortin receptor 3 (323 aa).

Residues M1–Q37 lie on the Extracellular side of the membrane. 3 N-linked (GlcNAc...) asparagine glycosylation sites follow: N2, N16, and N28. The chain crosses the membrane as a helical span at residues V38 to V63. The Cytoplasmic portion of the chain corresponds to V64–F75. Residues F76–I100 traverse the membrane as a helical segment. The Extracellular segment spans residues V101–N118. A helical transmembrane segment spans residues I119–V140. Topologically, residues D141 to K160 are cytoplasmic. A helical membrane pass occupies residues A161–V181. Residues Y182 to K186 lie on the Extracellular side of the membrane. Residues M187–M210 form a helical membrane-spanning segment. Over F211 to T245 the chain is Cytoplasmic. The helical transmembrane segment at I246 to C268 threads the bilayer. Residues P269–Y277 lie on the Extracellular side of the membrane. The chain crosses the membrane as a helical span at residues T278–F301. At R302–G323 the chain is on the cytoplasmic side. The S-palmitoyl cysteine moiety is linked to residue C315.

The protein belongs to the G-protein coupled receptor 1 family. In terms of tissue distribution, brain, placental, and gut tissues.

It localises to the cell membrane. Its function is as follows. Receptor for MSH (alpha, beta and gamma) and ACTH. This receptor is mediated by G proteins which activate adenylate cyclase. Required for expression of anticipatory patterns of activity and wakefulness during periods of limited nutrient availability and for the normal regulation of circadian clock activity in the brain. This chain is Melanocortin receptor 3 (MC3R), found in Homo sapiens (Human).